A 93-amino-acid polypeptide reads, in one-letter code: Small ribosomal subunit protein uS19 (93 aa).

It belongs to the universal ribosomal protein uS19 family.

Protein S19 forms a complex with S13 that binds strongly to the 16S ribosomal RNA. The protein is Small ribosomal subunit protein uS19 of Oleidesulfovibrio alaskensis (strain ATCC BAA-1058 / DSM 17464 / G20) (Desulfovibrio alaskensis).